A 784-amino-acid polypeptide reads, in one-letter code: LPS-assembly protein LptD (784 aa).

Positions 1–24 are cleaved as a signal peptide; the sequence is MKKRIPTLLATMIATALYSQQGLA. Intrachain disulfides connect C31–C724 and C173–C725.

Belongs to the LptD family. As to quaternary structure, component of the lipopolysaccharide transport and assembly complex. Interacts with LptE and LptA. Contains two intramolecular disulfide bonds.

The protein resides in the cell outer membrane. Together with LptE, is involved in the assembly of lipopolysaccharide (LPS) at the surface of the outer membrane. The protein is LPS-assembly protein LptD of Escherichia coli O1:K1 / APEC.